A 557-amino-acid polypeptide reads, in one-letter code: DNA 3'-5' helicase XPB (557 aa).

Positions 1–135 are required for protein stability or solubility; sequence MTDGPLIVQS…APLLGTRIAP (135 aa). Residues 190 to 344 enclose the Helicase ATP-binding domain; sequence VDNFWNGGSG…DVFSLIGPKR (155 aa). 203–210 provides a ligand contact to ATP; that stretch reads LPCGAGKT. Residues 298–301 carry the DEAH box motif; that stretch reads DEVH. The Helicase C-terminal domain maps to 398 to 544; it reads RVVEKLVAQH…AYRIVDADDI (147 aa).

Belongs to the helicase family. RAD25/XPB subfamily. In terms of assembly, monomer. Mn(2+) is required as a cofactor. Mg(2+) serves as cofactor. It depends on Ca(2+) as a cofactor.

It carries out the reaction Couples ATP hydrolysis with the unwinding of duplex DNA by translocating in the 3'-5' direction.. The catalysed reaction is ATP + H2O = ADP + phosphate + H(+). Functionally, ATP-dependent 3'-5' DNA helicase, unwinds 3'-overhangs, 3'- flaps, and splayed-arm DNA substrates but not 5'-overhangs or 5'-flap substrates. Requires ATP hydrolysis for activity; the ATPase activity is DNA-dependent and requires a minimum of 4 single-stranded nucleotides (nt) with 6-10 nt providing all necessary interactions for full processive unwinding. The ATPase prefers ATP over CTP or GTP, is almost inactive with TTP. This is DNA 3'-5' helicase XPB from Kineococcus radiotolerans (strain ATCC BAA-149 / DSM 14245 / SRS30216).